The chain runs to 539 residues: Prolyl 4-hydroxylase subunit alpha-2 (539 aa).

A signal peptide spans 1-16 (MRAVLLVCLLAGLAHA). Asparagine 110 carries an N-linked (GlcNAc...) asparagine glycan. In terms of domain architecture, Fe2OG dioxygenase spans 401-509 (TSEELQVANY…KWVSNKWIHE (109 aa)). Fe cation is bound by residues histidine 419, aspartate 421, and histidine 490. Lysine 500 is a binding site for 2-oxoglutarate.

Belongs to the P4HA family. In terms of assembly, heterotetramer of two alpha chains and two beta chains. Exist either as a phy-2(2)/pdi-2(2) tetramer or as a phy-1/phy-2/pdi-2(2) tetramer. It depends on Fe(2+) as a cofactor. L-ascorbate serves as cofactor.

The protein resides in the endoplasmic reticulum lumen. The catalysed reaction is L-prolyl-[collagen] + 2-oxoglutarate + O2 = trans-4-hydroxy-L-prolyl-[collagen] + succinate + CO2. Its function is as follows. Catalyzes the post-translational formation of 4-hydroxyproline in -Xaa-Pro-Gly- sequences in collagens and other proteins. The protein is Prolyl 4-hydroxylase subunit alpha-2 (phy-2) of Caenorhabditis elegans.